A 108-amino-acid chain; its full sequence is Putative disulfide oxidoreductase YuzD (108 aa).

A disulfide bond links Cys-16 and Cys-19.

This is Putative disulfide oxidoreductase YuzD (yuzD) from Bacillus subtilis (strain 168).